The primary structure comprises 518 residues: 2-isopropylmalate synthase (518 aa).

The region spanning 4–266 is the Pyruvate carboxyltransferase domain; sequence INVFDTTLRD…DSSLNLHELK (263 aa). Mn(2+) contacts are provided by aspartate 13, histidine 201, histidine 203, and asparagine 237. Positions 391–518 are regulatory domain; it reads EFLSLQVHYG…GLKRQTAVGS (128 aa).

The protein belongs to the alpha-IPM synthase/homocitrate synthase family. LeuA type 1 subfamily. As to quaternary structure, homodimer. Mn(2+) serves as cofactor.

It is found in the cytoplasm. It catalyses the reaction 3-methyl-2-oxobutanoate + acetyl-CoA + H2O = (2S)-2-isopropylmalate + CoA + H(+). The protein operates within amino-acid biosynthesis; L-leucine biosynthesis; L-leucine from 3-methyl-2-oxobutanoate: step 1/4. Its function is as follows. Catalyzes the condensation of the acetyl group of acetyl-CoA with 3-methyl-2-oxobutanoate (2-ketoisovalerate) to form 3-carboxy-3-hydroxy-4-methylpentanoate (2-isopropylmalate). The protein is 2-isopropylmalate synthase of Bacillus velezensis (strain DSM 23117 / BGSC 10A6 / LMG 26770 / FZB42) (Bacillus amyloliquefaciens subsp. plantarum).